The chain runs to 213 residues: Thymidylate kinase (213 aa).

10–17 is a binding site for ATP; it reads GLEGAGKT.

Belongs to the thymidylate kinase family.

The catalysed reaction is dTMP + ATP = dTDP + ADP. Its function is as follows. Phosphorylation of dTMP to form dTDP in both de novo and salvage pathways of dTTP synthesis. This Escherichia fergusonii (strain ATCC 35469 / DSM 13698 / CCUG 18766 / IAM 14443 / JCM 21226 / LMG 7866 / NBRC 102419 / NCTC 12128 / CDC 0568-73) protein is Thymidylate kinase.